We begin with the raw amino-acid sequence, 722 residues long: Putative tyrosine-protein kinase in cps region (722 aa).

2 helical membrane passes run 31–53 (IIIA…ATPI) and 427–449 (IVVL…VRIL).

Belongs to the etk/wzc family. Autophosphorylated on tyrosine residue(s).

Its subcellular location is the cell inner membrane. It carries out the reaction L-tyrosyl-[protein] + ATP = O-phospho-L-tyrosyl-[protein] + ADP + H(+). Its pathway is glycan metabolism; exopolysaccharide biosynthesis. This is Putative tyrosine-protein kinase in cps region from Klebsiella pneumoniae.